The following is a 461-amino-acid chain: Phosphatidate cytidylyltransferase 1 (461 aa).

Residues 1-67 are disordered; it reads MLELRHRGSC…IPEIPPSSDR (67 aa). An Omega-N-methylarginine modification is found at Arg-7. The span at 20–56 shows a compositional bias: basic and acidic residues; that stretch reads PHREGEAAGGDHETESTSDKETDIDDRYGDLDSRTDS. Ser-35 and Ser-37 each carry phosphoserine. The next 6 helical transmembrane spans lie at 96–116, 149–169, 183–203, 230–250, 279–299, and 357–377; these read MISL…LLVL, FLLC…FATF, HRFI…LSLV, LVIQ…SSVI, GFIG…YVLS, and IALS…ASGF.

It belongs to the CDS family. As to quaternary structure, homodimer. Interacts with FOS; this interaction may enhance catalytic activity. It depends on Mg(2+) as a cofactor. In terms of tissue distribution, expressed in adult tissues such as placenta, brain, small intestine, ovary, testis and prostate. Highly expressed in fetal kidney, lung and brain. Lower level in fetal liver.

The protein resides in the endoplasmic reticulum membrane. It carries out the reaction a 1,2-diacyl-sn-glycero-3-phosphate + CTP + H(+) = a CDP-1,2-diacyl-sn-glycerol + diphosphate. The catalysed reaction is 1-octadecanoyl-2-(5Z,8Z,11Z,14Z-eicosatetraenoyl)-sn-glycero-3-phosphate + CTP + H(+) = 1-octadecanoyl-2-(5Z,8Z,11Z,14Z-eicosatetraenoyl)-sn-glycero-3-cytidine-5'-diphosphate + diphosphate. It catalyses the reaction 1-octadecanoyl-2-(9Z,12Z-octadecadienoyl)-sn-glycero-3-phosphate + CTP + H(+) = 1-octadecanoyl-2-(9Z,12Z-octadecadienoyl)-sn-glycero-3-cytidine-5'-diphosphate + diphosphate. The enzyme catalyses 1-hexadecanoyl-2-(5Z,8Z,11Z,14Z-eicosatetraenoyl)-sn-glycero-3-phosphate + CTP + H(+) = 1-hexadecanoyl-2-(5Z,8Z,11Z,14Z-eicosatetraenoyl)-sn-glycero-3-cytidine-5'-diphosphate + diphosphate. It carries out the reaction 1,2-di-(5Z,8Z,11Z,14Z)-eicosatetraenoyl-sn-glycero-3-phosphate + CTP + H(+) = 1,2-di-(5Z,8Z,11Z,14Z-eicosatetraenoyl)-sn-glycero-3-cytidine-5'-diphosphate + diphosphate. The catalysed reaction is 1-octadecanoyl-2-(9Z-octadecenoyl)-sn-glycero-3-phosphate + CTP + H(+) = 1-octadecanoyl-2-(9Z-octadecenoyl)-sn-glycero-3-cytidine-5'-diphosphate + diphosphate. It catalyses the reaction 1-octadecanoyl-2-(4Z,7Z,10Z,13Z,16Z,19Z-docosahexaenoyl)-sn-glycero-3-phosphate + CTP + H(+) = 1-octadecanoyl-2-(4Z,7Z,10Z,13Z,16Z,19Z-docosahexaenoyl)-sn-glycero-3-cytidine-5'-diphosphate + diphosphate. The enzyme catalyses 1,2-di-(9Z,12Z-octadecadienoyl)-sn-glycero-3-phosphate + CTP + H(+) = 1,2-di-(9Z,12Z-octadecadienoyl)-sn-glycero-3-cytidine-5'-diphosphate + diphosphate. It carries out the reaction 1,2-di-(9Z-octadecenoyl)-sn-glycero-3-phosphate + CTP + H(+) = 1,2-di-(9Z-octadecenoyl)-sn-glycero-3-cytidine-5'-diphosphate + diphosphate. The protein operates within phospholipid metabolism; CDP-diacylglycerol biosynthesis; CDP-diacylglycerol from sn-glycerol 3-phosphate: step 3/3. With respect to regulation, inhibited by its anionic phospholipid end products, with phosphatidylinositol-(4,5)- bisphosphate showing the strongest inhibition. Its function is as follows. Catalyzes the conversion of phosphatidic acid (PA) to CDP-diacylglycerol (CDP-DAG), an essential intermediate in the synthesis of phosphatidylglycerol, cardiolipin and phosphatidylinositol. Exhibits almost no acyl chain preference for PA, showing no discrimination for the sn-1/sn-2 acyl chain composition of PAs. Plays an important role in regulating the growth of lipid droplets which are storage organelles at the center of lipid and energy homeostasis. Positively regulates the differentiation and development of adipocytes. The protein is Phosphatidate cytidylyltransferase 1 of Homo sapiens (Human).